The following is a 331-amino-acid chain: MSNVGFSATRGITSGAPDKVDMSLDDIIRLNKKEQQARRPSPGNRRPLQKGKVFVQGRPVGARARGQTQRGGGVPRGAITRAGVGRGRKIPPPVGRRRGQGVITGLAARKTAALQKGISPLNRPAINRKLQPFNNRSRPFNNQSRPFIQSAQYRQMQGQRRPYRQTDIQRGLNSTRPFQQRRRPLPPVQTQREARQATFLFRRGLKVHTQVPKPALTSIPPAPVRPRQWRTSTNSSGILTVSIDNPTAMTQSEPPCAWSLHPPAPTSSAPVKMKVEEEKKTEPPKGVPLQFDINIVGKPTAMTLNERFRILKDERVATAQTSKGSRFVTVG.

A UAP56-binding motif motif is present at residues 16-34 (APDKVDMSLDDIIRLNKKE). Disordered stretches follow at residues 30–51 (LNKK…LQKG), 63–99 (RARG…RRRG), and 158–193 (GQRR…TQRE). Polar residues predominate over residues 166–175 (TDIQRGLNST).

This sequence belongs to the UIF family.

The protein localises to the nucleus. It is found in the nucleoplasm. The protein resides in the nucleus speckle. Required for mRNA export from the nucleus to the cytoplasm. Acts as an adapter that uses the ddx39b/uap56-nfx1 pathway to ensure efficient mRNA export and delivering to the nuclear pore. In Salmo salar (Atlantic salmon), this protein is UAP56-interacting factor (fyttd1).